The chain runs to 258 residues: Short-chain dehydrogenase/reductase FrzI (258 aa).

Isoleucine 21, asparagine 41, and asparagine 94 together coordinate NADP(+). Residues serine 143 and serine 144 each act as proton donor in the active site. NADP(+) contacts are provided by tyrosine 157, lysine 161, valine 191, and threonine 193. Catalysis depends on tyrosine 157, which acts as the Proton acceptor. Catalysis depends on lysine 161, which acts as the Lowers pKa of active site Tyr.

The protein belongs to the short-chain dehydrogenases/reductases (SDR) family.

It catalyses the reaction (1S,3S,6S,7S,8R)-7-hydroxy-6-[(4-methoxyphenyl)methyl]-3-(methylamino)-5-azatricyclo[6.3.1.0(1,5)]dodecan-9-one + NADPH + H(+) = (1S,3S,6S,7S,8S,9S)-6-[(4-methoxyphenyl)methyl]-3-(methylamino)-5-azatricyclo[6.3.1.0(1,5)]dodecane-7,9-diol + NADP(+). The protein operates within secondary metabolite biosynthesis. Short-chain dehydrogenase/reductase; part of the gene cluster that mediates the biosynthesis of the alkaloid (-)-FR901483, a potent immunosuppressant that shows efficacy in animal models and a probable inhibitor of purine nucleotide biosynthesis by targeting phosphoribosylpyrophosphate amidotransferase (PPAT). Within the pathway, FrzI catalyzes the formation of dephospho-(-)-FR901483 from the aza-tricyclic intermediate produced by FrzH. The biosynthesis of (-)-FR901483 starts with the condensation of two L-tyrosines to yield (S,S)-dityrosyl-piperazine. This process occurs in 3 steps with the non-canonical nonribosomal peptide synthetase FrzA catalyzing the reduction of L-tyrosine into L-tyrosinal, the spontaneous condensation of 2 L-tyrosinal units, and the subsequent reduction by the NmrA-like family domain-containing oxidoreductase FrzB. The cytochrome P450 monooxygenase FrzC then performs coupling between N10 and C1' to morph the piperazine into a 1,4-diazabicyclo[3.2.1]octane spiro-fused to a 2,5-cyclohexadienone. The dienone portion is further reduced to cyclohexanone by the flavin-dependent reductase FrzD. The methyltranserases (MTs) FrzE and FrzF are then involved in the methylation at the C10' amine and the C4 phenolic oxygen, respectively. The order of the two MTs appear to be interchangeable. Cleavage of the C9-N10' bond by the dioxygenase FrzG then leads to formation of a conjugated iminium. In addition to the oxidation of C9, an additional dehydrogenation between C7 and C8 can occur to give a likely shunt product. The next biosynthetic step is the intramolecular aldol condensation catalyzed by the newly identified aldolase FrzH to yield an aza-tricyclic product with the formation of a C9-C3' bond. The short-chain dehydrogenase/reductase FrzI then produces dephospho-(-)-FR901483 that is phosphorylated at C4'-OH into (-)-FR901483 by the phosphotransferase FrzJ. This chain is Short-chain dehydrogenase/reductase FrzI, found in Cladobotryum sp.